A 143-amino-acid chain; its full sequence is Transcriptional regulator MraZ (143 aa).

SpoVT-AbrB domains lie at 5-47 (EFLH…PMDE) and 76-119 (AIEC…ANDA).

The protein belongs to the MraZ family. Forms oligomers.

It localises to the cytoplasm. The protein localises to the nucleoid. The protein is Transcriptional regulator MraZ of Oceanobacillus iheyensis (strain DSM 14371 / CIP 107618 / JCM 11309 / KCTC 3954 / HTE831).